A 293-amino-acid chain; its full sequence is 4-hydroxy-tetrahydrodipicolinate synthase (293 aa).

Threonine 47 contributes to the pyruvate binding site. Tyrosine 135 acts as the Proton donor/acceptor in catalysis. The active-site Schiff-base intermediate with substrate is lysine 164. Isoleucine 206 contributes to the pyruvate binding site.

The protein belongs to the DapA family. As to quaternary structure, homotetramer; dimer of dimers.

The protein resides in the cytoplasm. It carries out the reaction L-aspartate 4-semialdehyde + pyruvate = (2S,4S)-4-hydroxy-2,3,4,5-tetrahydrodipicolinate + H2O + H(+). It functions in the pathway amino-acid biosynthesis; L-lysine biosynthesis via DAP pathway; (S)-tetrahydrodipicolinate from L-aspartate: step 3/4. In terms of biological role, catalyzes the condensation of (S)-aspartate-beta-semialdehyde [(S)-ASA] and pyruvate to 4-hydroxy-tetrahydrodipicolinate (HTPA). This Flavobacterium psychrophilum (strain ATCC 49511 / DSM 21280 / CIP 103535 / JIP02/86) protein is 4-hydroxy-tetrahydrodipicolinate synthase.